The chain runs to 620 residues: UPF0313 protein BT_0254 (620 aa).

One can recognise a Radical SAM core domain in the interval 311 to 591; that stretch reads AYDMIKFSVN…AQRQFFFWYK (281 aa). The [4Fe-4S] cluster site is built by C325, C329, and C332.

This sequence belongs to the UPF0313 family. The cofactor is [4Fe-4S] cluster.

This Bacteroides thetaiotaomicron (strain ATCC 29148 / DSM 2079 / JCM 5827 / CCUG 10774 / NCTC 10582 / VPI-5482 / E50) protein is UPF0313 protein BT_0254.